Here is a 194-residue protein sequence, read N- to C-terminus: Flagellar transcriptional regulator FlhC (194 aa).

Cysteine 139, cysteine 142, cysteine 159, and cysteine 162 together coordinate Zn(2+).

The protein belongs to the FlhC family. Heterohexamer composed of two FlhC and four FlhD subunits. Each FlhC binds a FlhD dimer, forming a heterotrimer, and a hexamer assembles by dimerization of two heterotrimers. Zn(2+) is required as a cofactor.

It localises to the cytoplasm. Functions in complex with FlhD as a master transcriptional regulator that regulates transcription of several flagellar and non-flagellar operons by binding to their promoter region. Activates expression of class 2 flagellar genes, including fliA, which is a flagellum-specific sigma factor that turns on the class 3 genes. Also regulates genes whose products function in a variety of physiological pathways. The protein is Flagellar transcriptional regulator FlhC of Xenorhabdus nematophila (Achromobacter nematophilus).